The primary structure comprises 78 residues: Translation initiation factor IF-1 (78 aa).

In terms of domain architecture, S1-like spans 4–78 (KFNNQAKQDK…LKLGRIIGRK (75 aa)).

It belongs to the IF-1 family. Component of the 30S ribosomal translation pre-initiation complex which assembles on the 30S ribosome in the order IF-2 and IF-3, IF-1 and N-formylmethionyl-tRNA(fMet); mRNA recruitment can occur at any time during PIC assembly.

It localises to the cytoplasm. One of the essential components for the initiation of protein synthesis. Stabilizes the binding of IF-2 and IF-3 on the 30S subunit to which N-formylmethionyl-tRNA(fMet) subsequently binds. Helps modulate mRNA selection, yielding the 30S pre-initiation complex (PIC). Upon addition of the 50S ribosomal subunit IF-1, IF-2 and IF-3 are released leaving the mature 70S translation initiation complex. This chain is Translation initiation factor IF-1, found in Mycoplasma pneumoniae (strain ATCC 29342 / M129 / Subtype 1) (Mycoplasmoides pneumoniae).